Consider the following 329-residue polypeptide: Delta-aminolevulinic acid dehydratase (329 aa).

Lysine 202 functions as the Schiff-base intermediate with substrate in the catalytic mechanism. 2 residues coordinate 5-aminolevulinate: arginine 212 and arginine 223. Glutamate 239 contributes to the Mg(2+) binding site. Lysine 254 acts as the Schiff-base intermediate with substrate in catalysis. Residues serine 280 and tyrosine 319 each coordinate 5-aminolevulinate.

This sequence belongs to the ALAD family. Homooctamer.

The catalysed reaction is 2 5-aminolevulinate = porphobilinogen + 2 H2O + H(+). Its pathway is porphyrin-containing compound metabolism; protoporphyrin-IX biosynthesis; coproporphyrinogen-III from 5-aminolevulinate: step 1/4. Catalyzes an early step in the biosynthesis of tetrapyrroles. Binds two molecules of 5-aminolevulinate per subunit, each at a distinct site, and catalyzes their condensation to form porphobilinogen. The sequence is that of Delta-aminolevulinic acid dehydratase (hemB) from Mycobacterium leprae (strain TN).